Reading from the N-terminus, the 917-residue chain is MEEQKSIKETLQQGASGDKTKKKLVIKKKAAPSDEKKESSPGAQGQTTATEAKQSSPASSDKKKDLNELIREEAKRQGLGSGPQAPSQASPIVSRPDRKPEPLPQPDREKAPMDRKPESILSGDTSSPNFRSGGGQGGGNQGYFRKEDRNPIVSRPTTPRPPRPEGQTGGGYQGNRGPGQGGGYQGNRGPGQGGPGGYQGNRGPGQGGPGGYQGNRGPGQGGPGGYQGNRGPGQGGPGGYQGNRGPGQGGPGGYQGNRGARPIGQGGPGSGRPPGDAPFGAPGGLPGAGGPGGAKKRVFDKEKGGREENENTKFFKQSFRKQKAQAAALAAVPKEISILENIQVGEIAKKLNLKPGEVISKLMKMGMMVTINNVIDAETASILADDYGCKVKIVSLYDETVIEEEKDAPEDYITRPPVVTIMGHVDHGKTKLLDTIRSSRVAEGESGGITQHIGAYQVETERGKIAFLDTPGHEAFTSMRARGASVTDIVVLVVAADDGVMPQTIEAINHAKEAEVPIIVAVNKIDLPAANPEKVRQELSNYGLQPEEWGGTTIFCDISAKSNIGIDKLLEMLIIQAELLDHKANPKRKAKGTIVEAKLDPGRGAVATVLIQNGTLRVGDAFVAGVHAGRVRAMYDDLGRSIKEAGPSFPALVTGLDGVPDAGAPFDVVIDDKEARTISHSRQEYERLGQSKNAATRVTLDNMSEIIKQGALKELKVIIKADVRGSTEAVKEALEKLSTADVRLNVIHAGTGAIVDSDIILASASNAIVIGFHTRANPKTVSLAEKEKVEIKYYSIIYDVVNEVKASMEGMLEPEKVENIIGKVEIRDVFKISKVGNIAGCMVKSGKVTKQAHVRVISSETGEITWEGKIKNLKRMKDDVADVLTGFECGILLDGFNDFSVGDEIEAYEIREIARKL.

Residues 1–312 (MEEQKSIKET…KGGREENENT (312 aa)) are disordered. Basic residues predominate over residues 20-30 (TKKKLVIKKKA). Residues 41–59 (PGAQGQTTATEAKQSSPAS) are compositionally biased toward polar residues. Basic and acidic residues-rich tracts occupy residues 60 to 76 (SDKKKDLNELIREEAKR) and 95 to 118 (RPDRKPEPLPQPDREKAPMDRKPE). Composition is skewed to gly residues over residues 132-141 (SGGGQGGGNQ), 167-256 (QTGG…GYQG), and 281-293 (APGGLPGAGGPGG). The segment covering 297–312 (RVFDKEKGGREENENT) has biased composition (basic and acidic residues). The tr-type G domain maps to 414 to 587 (TRPPVVTIMG…ELLDHKANPK (174 aa)). The segment at 423–430 (GHVDHGKT) is G1. 423–430 (GHVDHGKT) serves as a coordination point for GTP. Residues 448–452 (GITQH) form a G2 region. Positions 469–472 (DTPG) are G3. GTP is bound by residues 469–473 (DTPGH) and 523–526 (NKID). Residues 523 to 526 (NKID) are G4. The segment at 559–561 (SAK) is G5.

It belongs to the TRAFAC class translation factor GTPase superfamily. Classic translation factor GTPase family. IF-2 subfamily.

Its subcellular location is the cytoplasm. Functionally, one of the essential components for the initiation of protein synthesis. Protects formylmethionyl-tRNA from spontaneous hydrolysis and promotes its binding to the 30S ribosomal subunits. Also involved in the hydrolysis of GTP during the formation of the 70S ribosomal complex. This Leptospira biflexa serovar Patoc (strain Patoc 1 / ATCC 23582 / Paris) protein is Translation initiation factor IF-2.